A 299-amino-acid chain; its full sequence is Taste receptor type 2 member 50 (299 aa).

Position 1 (methionine 1) is a topological domain, extracellular. A helical transmembrane segment spans residues 2–22; the sequence is IPFLHIFFSVLILVLFVLGNF. At 23-55 the chain is on the cytoplasmic side; it reads ANGFIALVNFIDWVKRKKISLADQILTALAVSR. A helical membrane pass occupies residues 56-76; sequence VGLLWALLLNWYLTELNPAFY. Over 77–87 the chain is Extracellular; sequence SVELRITSYNA. A helical membrane pass occupies residues 88–108; the sequence is WVVTNHFSMWLAASLSIFYLL. Residues 109–126 are Cytoplasmic-facing; it reads KIANFSNLSFLNLKRRVR. Residues 127–147 traverse the membrane as a helical segment; it reads SIILVILLGSLLFLVCHLLAV. Residues 148-181 lie on the Extracellular side of the membrane; sequence NMDENMWTEEYEGNMTGKMKLRNAAHLSYMTVTT. N-linked (GlcNAc...) asparagine glycosylation occurs at asparagine 161. Residues 182–202 traverse the membrane as a helical segment; it reads LWSFIPFMLSLISFLMLIFSL. At 203–229 the chain is on the cytoplasmic side; the sequence is CKHLKKMQLHGEGSRDPSTTVHIKALQ. Residues 230–250 form a helical membrane-spanning segment; it reads TLISFLLLCAIFFLFLIISVW. The Extracellular portion of the chain corresponds to 251–259; that stretch reads SPRRLQNEP. Residues 260-280 traverse the membrane as a helical segment; the sequence is VFMVCKAVGNIYLSFDSFVLI. The Cytoplasmic segment spans residues 281 to 299; the sequence is WRTKKLKHIFLLILCQIRC.

This sequence belongs to the G-protein coupled receptor T2R family.

It localises to the membrane. In terms of biological role, receptor that may play a role in the perception of bitterness and is gustducin-linked. May play a role in sensing the chemical composition of the gastrointestinal content. The activity of this receptor may stimulate alpha gustducin, mediate PLC-beta-2 activation and lead to the gating of TRPM5. In Macaca mulatta (Rhesus macaque), this protein is Taste receptor type 2 member 50 (TAS2R50).